A 70-amino-acid polypeptide reads, in one-letter code: Basic phospholipase A2 2 (70 aa).

Cysteine 28 and cysteine 44 are disulfide-bonded. The active site involves histidine 47. Aspartate 48 is a binding site for Ca(2+).

The protein belongs to the phospholipase A2 family. Group II subfamily. D49 sub-subfamily. Requires Ca(2+) as cofactor. In terms of tissue distribution, expressed by the venom gland.

Its subcellular location is the secreted. It catalyses the reaction a 1,2-diacyl-sn-glycero-3-phosphocholine + H2O = a 1-acyl-sn-glycero-3-phosphocholine + a fatty acid + H(+). Its function is as follows. Snake venom phospholipase A2 (PLA2) that exhibits strong myotoxicity. PLA2 catalyzes the calcium-dependent hydrolysis of the 2-acyl groups in 3-sn-phosphoglycerides. The protein is Basic phospholipase A2 2 of Trimeresurus stejnegeri (Chinese green tree viper).